The chain runs to 93 residues: Large ribosomal subunit protein uL23cz/uL23cy (93 aa).

This sequence belongs to the universal ribosomal protein uL23 family. In terms of assembly, part of the 50S ribosomal subunit.

It is found in the plastid. Its subcellular location is the chloroplast. In terms of biological role, binds to 23S rRNA. This is Large ribosomal subunit protein uL23cz/uL23cy (rpl23-A) from Coffea arabica (Arabian coffee).